The following is a 365-amino-acid chain: Chorismate synthase (365 aa).

Arginine 48 is an NADP(+) binding site. FMN is bound by residues 130–132 (RSS), 242–243 (NA), glycine 290, 305–309 (KPTSS), and arginine 331.

It belongs to the chorismate synthase family. In terms of assembly, homotetramer. It depends on FMNH2 as a cofactor.

It catalyses the reaction 5-O-(1-carboxyvinyl)-3-phosphoshikimate = chorismate + phosphate. It participates in metabolic intermediate biosynthesis; chorismate biosynthesis; chorismate from D-erythrose 4-phosphate and phosphoenolpyruvate: step 7/7. Functionally, catalyzes the anti-1,4-elimination of the C-3 phosphate and the C-6 proR hydrogen from 5-enolpyruvylshikimate-3-phosphate (EPSP) to yield chorismate, which is the branch point compound that serves as the starting substrate for the three terminal pathways of aromatic amino acid biosynthesis. This reaction introduces a second double bond into the aromatic ring system. The polypeptide is Chorismate synthase (Erythrobacter litoralis (strain HTCC2594)).